We begin with the raw amino-acid sequence, 212 residues long: ER lumen protein-retaining receptor 1-B (212 aa).

The Lumenal segment spans residues 1–4 (MNIF). A helical transmembrane segment spans residues 5–24 (RFLGDISHLSAIIILLLKIW). Topologically, residues 25 to 32 (KSRSCAGI) are cytoplasmic. The chain crosses the membrane as a helical span at residues 33–52 (SGKSQLLFAIVFTTRYLDLF). The tract at residues 47–48 (RY) is interaction with the K-D-E-L motif on target proteins. At 53–58 (TNFISF) the chain is on the lumenal side. The helical transmembrane segment at 59 to 79 (YNTSMKVVYVASSYATVWMIY) threads the bilayer. Topologically, residues 80 to 92 (SKFKATYDGNHDT) are cytoplasmic. A helical membrane pass occupies residues 93–110 (FRVEFLIVPTAILSFLVN). Residues 111–116 (HDFTPL) are Lumenal-facing. A helical membrane pass occupies residues 117–135 (EILWTFSIYLESVAILPQL). Topologically, residues 136-149 (FMVSKTGEAETITS) are cytoplasmic. Residues 150 to 168 (HYLFALGIYRTLYLFNWIW) traverse the membrane as a helical segment. Residues 159–169 (RTLYLFNWIWR) are interaction with the K-D-E-L motif on target proteins. Residues 169-178 (RYQFEEFFDL) are Lumenal-facing. A helical transmembrane segment spans residues 179-199 (IAIVAGLVQTVLYCDFFYLYI). Topologically, residues 200 to 212 (TKVLKGKKLSLPA) are cytoplasmic. The important for recycling of cargo proteins with the sequence motif K-D-E-L from the Golgi to the endoplasmic reticulum stretch occupies residues 204 to 207 (KGKK).

The protein belongs to the ERD2 family.

Its subcellular location is the golgi apparatus membrane. It localises to the cytoplasmic vesicle. The protein resides in the COPI-coated vesicle membrane. It is found in the endoplasmic reticulum membrane. The protein localises to the endoplasmic reticulum-Golgi intermediate compartment membrane. Its function is as follows. Receptor for the C-terminal sequence motif K-D-E-L that is present on endoplasmic reticulum resident proteins and that mediates their recycling from the Golgi back to the endoplasmic reticulum. In Xenopus laevis (African clawed frog), this protein is ER lumen protein-retaining receptor 1-B (kdelr1-b).